A 90-amino-acid polypeptide reads, in one-letter code: Small ribosomal subunit protein bS20 (90 aa).

The interval 1 to 29 (MANTASAEKRNRQAQKRRARNVQVRTGVK) is disordered.

It belongs to the bacterial ribosomal protein bS20 family.

Binds directly to 16S ribosomal RNA. This chain is Small ribosomal subunit protein bS20, found in Anaeromyxobacter sp. (strain Fw109-5).